The sequence spans 105 residues: U2-lycotoxin-Ls1b (105 aa).

Residues 1 to 17 (MIKYVLISALLVVAVYS) form the signal peptide. Residues 18–41 (FTIEDNEDALLEEAEDELDTEEER) constitute a propeptide that is removed on maturation. Intrachain disulfides connect Cys51–Cys67, Cys58–Cys97, Cys60–Cys83, and Cys69–Cys81.

Belongs to the neurotoxin 04 (omega-agtx) family. 01 (type I omega-agtx) subfamily. Expressed by the venom gland.

The protein localises to the secreted. Insecticidal to house crickets. It induces an excitatory slow-onset impact that leads to irreversible spastic paralysis. It also modifies human voltage-gated potassium channel Kv1.5/KCNA5. Most likely, it binds to the voltage-sensing domain of the channel, suggesting it does not block the pore but prevents its opening at physiological membrane potentials. The recombinant peptide binds to the channel in an irreversible manner and slows down the hKv1.5 current activation kinetics. It is not toxic to mice, when intracranially injected (at 0.5 ug/g mouse). The polypeptide is U2-lycotoxin-Ls1b (Lycosa singoriensis (Wolf spider)).